Consider the following 31-residue polypeptide: Cyclotide mden-L (31 aa).

The cyclopeptide (Gly-Asn) cross-link spans 1–31; the sequence is GSIPCGESCVYIPCISAVLGCSCKNKVCYRN. 3 disulfide bridges follow: cysteine 5–cysteine 21, cysteine 9–cysteine 23, and cysteine 14–cysteine 28.

This sequence belongs to the cyclotide family. Bracelet subfamily. In terms of processing, this is a cyclic peptide.

Its function is as follows. Probably participates in a plant defense mechanism. The sequence is that of Cyclotide mden-L from Melicytus dentatus (Tree violet).